A 67-amino-acid polypeptide reads, in one-letter code: Ceratotoxin-C (67 aa).

Positions 1–23 (MANIKAVFLICIVAFIAFHCVVA) are cleaved as a signal peptide. Residues 24–35 (EPTAEDSVVVKR) constitute a propeptide that is removed on maturation.

Homomer of four to six subunits.

The protein localises to the secreted. Female-specific peptides with potent activity against Gram-positive and Gram-negative bacteria. They have as well hemolytic activity. This is Ceratotoxin-C (CTXC1) from Ceratitis capitata (Mediterranean fruit fly).